A 1894-amino-acid polypeptide reads, in one-letter code: Plexin-A2 (1894 aa).

A signal peptide spans 1-34 (MEQRRPWPRALEVDSRSVVLLSVVWVLLAPPAAG). The Sema domain occupies 35 to 508 (MPQFSTFHSE…SERQVTRVPV (474 aa)). Residues 35–1237 (MPQFSTFHSE…VISDSLLTLP (1203 aa)) are Extracellular-facing. N-linked (GlcNAc...) asparagine glycans are attached at residues N76 and N91. 10 disulfides stabilise this stretch: C94–C103, C129–C137, C284–C405, C300–C356, C374–C393, C511–C528, C517–C559, C520–C537, C531–C543, and C594–C613. N-linked (GlcNAc...) asparagine glycosylation occurs at N327. Residues N598, N696, and N756 are each glycosylated (N-linked (GlcNAc...) asparagine). 4 IPT/TIG domains span residues 858 to 951 (PQIT…QYTF), 954 to 1037 (PSVL…QFEY), 1041 to 1139 (PRVQ…KFIY), and 1143 to 1228 (PTFE…SVSV). A glycan (N-linked (GlcNAc...) asparagine) is linked at N1205. Residues 1238–1258 (AIVSIAAGGSLLLIIVIIVLI) traverse the membrane as a helical segment. The Cytoplasmic portion of the chain corresponds to 1259 to 1894 (AYKRKSREND…QLINAMSIES (636 aa)). Residues 1261-1310 (KRKSRENDLTLKRLQMQMDNLESRVALECKEAFAELQTDINELTSDLDRS) are a coiled coil. S1612 is modified (phosphoserine).

This sequence belongs to the plexin family. In terms of assembly, homodimer. The PLXNA2 homodimer interacts with a SEMA6A homodimer, giving rise to a heterotetramer. Interacts directly with NRP1 and NRP2. Interacts with RND1. As to expression, detected in fetal brain.

It localises to the cell membrane. In terms of biological role, coreceptor for SEMA3A and SEMA6A. Necessary for signaling by SEMA6A and class 3 semaphorins and subsequent remodeling of the cytoskeleton. Plays a role in axon guidance, invasive growth and cell migration. Class 3 semaphorins bind to a complex composed of a neuropilin and a plexin. The plexin modulates the affinity of the complex for specific semaphorins, and its cytoplasmic domain is required for the activation of down-stream signaling events in the cytoplasm. This chain is Plexin-A2 (PLXNA2), found in Homo sapiens (Human).